Here is a 271-residue protein sequence, read N- to C-terminus: CAAX prenyl protease 2 (271 aa).

The Extracellular portion of the chain corresponds to Met-1–Pro-9. A helical membrane pass occupies residues Lys-10–Leu-30. The Cytoplasmic segment spans residues Ser-31–Gly-38. A helical membrane pass occupies residues Ile-39–Ile-59. At Ala-60 to Asn-82 the chain is on the extracellular side. A helical membrane pass occupies residues Leu-83–Ile-105. At Pro-106–Asp-125 the chain is on the cytoplasmic side. The helical transmembrane segment at Phe-126–Phe-149 threads the bilayer. Glu-140 (proton donor/acceptor) is an active-site residue. Residues Asp-150–Phe-159 are Extracellular-facing. A helical transmembrane segment spans residues Lys-160–Val-179. His-173 acts as the Proton donor/acceptor in catalysis. At Asn-180–Ile-192 the chain is on the cytoplasmic side. The helical transmembrane segment at Trp-193–Cys-213 threads the bilayer. The Extracellular portion of the chain corresponds to Leu-214–Ser-219. Residues Ile-220–Leu-237 form a helical membrane-spanning segment. Topologically, residues Ala-238–Thr-243 are cytoplasmic. Residues Lys-244–Lys-263 traverse the membrane as a helical segment. The Extracellular segment spans residues Lys-264 to Gly-271.

This sequence belongs to the peptidase U48 family.

The protein localises to the cell membrane. It catalyses the reaction Hydrolyzes the peptide bond -P2-(S-farnesyl or geranylgeranyl)C-P1'-P2'-P3'-COOH where P1' and P2' are amino acids with aliphatic sidechains and P3' is any C-terminal residue.. With respect to regulation, activity is unaffected by metalloprotease inhibitors 5 mM EDTA and 5 mM Zn(2+). Activity partially inhibited by 1,10-phenanthroline and 1,7-phenanthroline. Functionally, protease involved in the processing of a variety of prenylated proteins containing the C-terminal CAAX motif, where C is a cysteine modified with an isoprenoid lipid, A is an aliphatic amino acid and X is any C-terminal amino acid. Proteolytically removes the C-terminal three residues of farnesylated proteins, leaving the prenylated cysteine as the new C-terminus. Hydrolysis depends on a farnesylated cysteine residue and no activity is shown towards geranylgeranylated peptides. The polypeptide is CAAX prenyl protease 2 (Methanococcus maripaludis (strain DSM 14266 / JCM 13030 / NBRC 101832 / S2 / LL)).